The sequence spans 224 residues: UPF0758 protein Bpro_0948 (224 aa).

The MPN domain occupies 102–224 (LFSTPQAVRD…AVSMAELGLL (123 aa)). Zn(2+) contacts are provided by His173, His175, and Asp186. Positions 173-186 (HNHPSGAATPSRAD) match the JAMM motif motif.

This sequence belongs to the UPF0758 family.

In Polaromonas sp. (strain JS666 / ATCC BAA-500), this protein is UPF0758 protein Bpro_0948.